The following is a 245-amino-acid chain: Flavin-dependent thymidylate synthase (245 aa).

One can recognise a ThyX domain in the interval 5–210 (IKVRLVNYTK…ELRPIIRWAK (206 aa)). Residues S59, 83–85 (RHR), and Q91 contribute to the FAD site. DUMP contacts are provided by residues 80–83 (QLVR), 91–95 (QQSMR), and R149. A ThyX motif motif is present at residues 83–93 (RHRIASYTQQS). Residues 165-167 (NLR) and H171 contribute to the FAD site. R176 is a dUMP binding site. R176 (involved in ionization of N3 of dUMP, leading to its activation) is an active-site residue.

It belongs to the thymidylate synthase ThyX family. In terms of assembly, homotetramer. Requires FAD as cofactor.

It catalyses the reaction dUMP + (6R)-5,10-methylene-5,6,7,8-tetrahydrofolate + NADPH + H(+) = dTMP + (6S)-5,6,7,8-tetrahydrofolate + NADP(+). It participates in pyrimidine metabolism; dTTP biosynthesis. Its function is as follows. Catalyzes the reductive methylation of 2'-deoxyuridine-5'-monophosphate (dUMP) to 2'-deoxythymidine-5'-monophosphate (dTMP) while utilizing 5,10-methylenetetrahydrofolate (mTHF) as the methyl donor, and NADPH and FADH(2) as the reductant. The protein is Flavin-dependent thymidylate synthase of Thermococcus onnurineus (strain NA1).